The primary structure comprises 71 residues: Conotoxin De13.1 (71 aa).

A signal peptide spans 1–19 (MSGMGVLLLVLLLVMPLAA). The propeptide occupies 20 to 35 (FHQDGEGEATRRSGGL). Pro40 and Pro44 each carry 4-hydroxyproline. A 6'-bromotryptophan modification is found at Trp51. At Glu52 the chain carries 4-carboxyglutamate. A 5-hydroxylysine modification is found at Lys55. Position 58 is a 4-hydroxyproline (Pro58). His69 carries the post-translational modification Histidine amide.

This sequence belongs to the conotoxin G superfamily. In terms of processing, contains 4 disulfide bonds. Expressed by the venom duct.

The protein localises to the secreted. In Conasprella delessertii (Sozon's cone), this protein is Conotoxin De13.1.